The following is a 110-amino-acid chain: Senescence associated gene 20 (110 aa).

This is Senescence associated gene 20 from Arabidopsis thaliana (Mouse-ear cress).